The sequence spans 97 residues: Exodeoxyribonuclease 7 small subunit (97 aa).

Residues 64-97 are disordered; sequence NGQLHPAEEKGDDVSNNGVQNQGYKSQFLDGDVF. Over residues 77–88 the composition is skewed to polar residues; the sequence is VSNNGVQNQGYK.

This sequence belongs to the XseB family. As to quaternary structure, heterooligomer composed of large and small subunits.

It localises to the cytoplasm. The enzyme catalyses Exonucleolytic cleavage in either 5'- to 3'- or 3'- to 5'-direction to yield nucleoside 5'-phosphates.. Functionally, bidirectionally degrades single-stranded DNA into large acid-insoluble oligonucleotides, which are then degraded further into small acid-soluble oligonucleotides. The polypeptide is Exodeoxyribonuclease 7 small subunit (Limosilactobacillus fermentum (strain NBRC 3956 / LMG 18251) (Lactobacillus fermentum)).